The following is a 107-amino-acid chain: UPF0122 protein BLi01817/BL02321 (107 aa).

This sequence belongs to the UPF0122 family.

Might take part in the signal recognition particle (SRP) pathway. This is inferred from the conservation of its genetic proximity to ftsY/ffh. May be a regulatory protein. The polypeptide is UPF0122 protein BLi01817/BL02321 (Bacillus licheniformis (strain ATCC 14580 / DSM 13 / JCM 2505 / CCUG 7422 / NBRC 12200 / NCIMB 9375 / NCTC 10341 / NRRL NRS-1264 / Gibson 46)).